The chain runs to 502 residues: ATP synthase subunit alpha (502 aa).

169 to 176 (GDRQTGKT) serves as a coordination point for ATP.

This sequence belongs to the ATPase alpha/beta chains family. As to quaternary structure, F-type ATPases have 2 components, CF(1) - the catalytic core - and CF(0) - the membrane proton channel. CF(1) has five subunits: alpha(3), beta(3), gamma(1), delta(1), epsilon(1). CF(0) has three main subunits: a(1), b(2) and c(9-12). The alpha and beta chains form an alternating ring which encloses part of the gamma chain. CF(1) is attached to CF(0) by a central stalk formed by the gamma and epsilon chains, while a peripheral stalk is formed by the delta and b chains.

Its subcellular location is the cell membrane. It catalyses the reaction ATP + H2O + 4 H(+)(in) = ADP + phosphate + 5 H(+)(out). In terms of biological role, produces ATP from ADP in the presence of a proton gradient across the membrane. The alpha chain is a regulatory subunit. The chain is ATP synthase subunit alpha from Bacillus sp. (strain PS3).